We begin with the raw amino-acid sequence, 247 residues long: MSHRDTLFSAPIARLGDWTFDERVAEVFPDMIQRSVPGYSNIISMIGMLAERFVQPGTQVYDLGCSLGAATLSVRRNIHHDNCKIIAIDNSPAMIERCRRHIDAYKAPTPVDVIEGDIRDIAIENASMVVLNFTLQFLEPSERQALLDKIYQGLNPGGALVLSEKFSFEDAKVGELLFNMHHDFKRANGYSELEISQKRSMLENVMLTDSVETHKARLHKAGFEHSELWFQCFNFGSLVTLKAEDAA.

Residues Tyr39, 64–66 (GCS), 89–90 (DN), 117–118 (DI), Asn132, and Arg199 each bind S-adenosyl-L-methionine.

This sequence belongs to the class I-like SAM-binding methyltransferase superfamily. Cx-SAM synthase family. As to quaternary structure, homodimer.

The enzyme catalyses prephenate + S-adenosyl-L-methionine = carboxy-S-adenosyl-L-methionine + 3-phenylpyruvate + H2O. Its function is as follows. Catalyzes the conversion of S-adenosyl-L-methionine (SAM) to carboxy-S-adenosyl-L-methionine (Cx-SAM). This Escherichia coli O127:H6 (strain E2348/69 / EPEC) protein is Carboxy-S-adenosyl-L-methionine synthase.